The primary structure comprises 267 residues: Phosphonoacetaldehyde hydrolase (267 aa).

D10 serves as the catalytic Nucleophile. 2 residues coordinate Mg(2+): D10 and A12. K51 acts as the Schiff-base intermediate with substrate in catalysis. Position 184 (D184) interacts with Mg(2+).

The protein belongs to the HAD-like hydrolase superfamily. PhnX family. In terms of assembly, homodimer. Mg(2+) serves as cofactor.

The enzyme catalyses phosphonoacetaldehyde + H2O = acetaldehyde + phosphate + H(+). Functionally, involved in phosphonate degradation. In Paraburkholderia phytofirmans (strain DSM 17436 / LMG 22146 / PsJN) (Burkholderia phytofirmans), this protein is Phosphonoacetaldehyde hydrolase.